The following is a 156-amino-acid chain: Cell division protein SepF (156 aa).

Positions 23-36 (SYEKEQTDMKKQQD) are enriched in basic and acidic residues. The disordered stretch occupies residues 23-49 (SYEKEQTDMKKQQDPPEQQDVTFPKAQ).

Belongs to the SepF family. In terms of assembly, homodimer. Interacts with FtsZ.

The protein localises to the cytoplasm. Functionally, cell division protein that is part of the divisome complex and is recruited early to the Z-ring. Probably stimulates Z-ring formation, perhaps through the cross-linking of FtsZ protofilaments. Its function overlaps with FtsA. The polypeptide is Cell division protein SepF (Bacillus anthracis (strain CDC 684 / NRRL 3495)).